The sequence spans 253 residues: Imidazole glycerol phosphate synthase subunit HisF (253 aa).

Residues D11 and D130 contribute to the active site.

The protein belongs to the HisA/HisF family. In terms of assembly, heterodimer of HisH and HisF.

It localises to the cytoplasm. It carries out the reaction 5-[(5-phospho-1-deoxy-D-ribulos-1-ylimino)methylamino]-1-(5-phospho-beta-D-ribosyl)imidazole-4-carboxamide + L-glutamine = D-erythro-1-(imidazol-4-yl)glycerol 3-phosphate + 5-amino-1-(5-phospho-beta-D-ribosyl)imidazole-4-carboxamide + L-glutamate + H(+). It functions in the pathway amino-acid biosynthesis; L-histidine biosynthesis; L-histidine from 5-phospho-alpha-D-ribose 1-diphosphate: step 5/9. Its function is as follows. IGPS catalyzes the conversion of PRFAR and glutamine to IGP, AICAR and glutamate. The HisF subunit catalyzes the cyclization activity that produces IGP and AICAR from PRFAR using the ammonia provided by the HisH subunit. This Dehalococcoides mccartyi (strain ATCC BAA-2266 / KCTC 15142 / 195) (Dehalococcoides ethenogenes (strain 195)) protein is Imidazole glycerol phosphate synthase subunit HisF.